Here is a 262-residue protein sequence, read N- to C-terminus: Acyl-[acyl-carrier-protein]--UDP-N-acetylglucosamine O-acyltransferase (262 aa).

The protein belongs to the transferase hexapeptide repeat family. LpxA subfamily. In terms of assembly, homotrimer.

Its subcellular location is the cytoplasm. The catalysed reaction is a (3R)-hydroxyacyl-[ACP] + UDP-N-acetyl-alpha-D-glucosamine = a UDP-3-O-[(3R)-3-hydroxyacyl]-N-acetyl-alpha-D-glucosamine + holo-[ACP]. The protein operates within glycolipid biosynthesis; lipid IV(A) biosynthesis; lipid IV(A) from (3R)-3-hydroxytetradecanoyl-[acyl-carrier-protein] and UDP-N-acetyl-alpha-D-glucosamine: step 1/6. Involved in the biosynthesis of lipid A, a phosphorylated glycolipid that anchors the lipopolysaccharide to the outer membrane of the cell. In Burkholderia vietnamiensis (strain G4 / LMG 22486) (Burkholderia cepacia (strain R1808)), this protein is Acyl-[acyl-carrier-protein]--UDP-N-acetylglucosamine O-acyltransferase.